A 314-amino-acid polypeptide reads, in one-letter code: Ribosomal RNA small subunit methyltransferase H (314 aa).

S-adenosyl-L-methionine is bound by residues 36–38 (GGH), aspartate 56, phenylalanine 83, aspartate 104, and glutamine 111.

It belongs to the methyltransferase superfamily. RsmH family.

Its subcellular location is the cytoplasm. It carries out the reaction cytidine(1402) in 16S rRNA + S-adenosyl-L-methionine = N(4)-methylcytidine(1402) in 16S rRNA + S-adenosyl-L-homocysteine + H(+). Its function is as follows. Specifically methylates the N4 position of cytidine in position 1402 (C1402) of 16S rRNA. In Syntrophotalea carbinolica (strain DSM 2380 / NBRC 103641 / GraBd1) (Pelobacter carbinolicus), this protein is Ribosomal RNA small subunit methyltransferase H.